A 283-amino-acid polypeptide reads, in one-letter code: Phosphatidylserine decarboxylase proenzyme (283 aa).

Residues Asp96, His152, and Ser250 each act as charge relay system; for autoendoproteolytic cleavage activity in the active site. Catalysis depends on Ser250, which acts as the Schiff-base intermediate with substrate; via pyruvic acid; for decarboxylase activity. Ser250 bears the Pyruvic acid (Ser); by autocatalysis mark.

The protein belongs to the phosphatidylserine decarboxylase family. PSD-B subfamily. Prokaryotic type I sub-subfamily. As to quaternary structure, heterodimer of a large membrane-associated beta subunit and a small pyruvoyl-containing alpha subunit. Pyruvate serves as cofactor. Is synthesized initially as an inactive proenzyme. Formation of the active enzyme involves a self-maturation process in which the active site pyruvoyl group is generated from an internal serine residue via an autocatalytic post-translational modification. Two non-identical subunits are generated from the proenzyme in this reaction, and the pyruvate is formed at the N-terminus of the alpha chain, which is derived from the carboxyl end of the proenzyme. The autoendoproteolytic cleavage occurs by a canonical serine protease mechanism, in which the side chain hydroxyl group of the serine supplies its oxygen atom to form the C-terminus of the beta chain, while the remainder of the serine residue undergoes an oxidative deamination to produce ammonia and the pyruvoyl prosthetic group on the alpha chain. During this reaction, the Ser that is part of the protease active site of the proenzyme becomes the pyruvoyl prosthetic group, which constitutes an essential element of the active site of the mature decarboxylase.

It is found in the cell membrane. The enzyme catalyses a 1,2-diacyl-sn-glycero-3-phospho-L-serine + H(+) = a 1,2-diacyl-sn-glycero-3-phosphoethanolamine + CO2. It participates in phospholipid metabolism; phosphatidylethanolamine biosynthesis; phosphatidylethanolamine from CDP-diacylglycerol: step 2/2. Functionally, catalyzes the formation of phosphatidylethanolamine (PtdEtn) from phosphatidylserine (PtdSer). The polypeptide is Phosphatidylserine decarboxylase proenzyme (Acinetobacter baumannii (strain SDF)).